The sequence spans 256 residues: DNA repair protein RecO (256 aa).

This sequence belongs to the RecO family.

Its function is as follows. Involved in DNA repair and RecF pathway recombination. This Bartonella henselae (strain ATCC 49882 / DSM 28221 / CCUG 30454 / Houston 1) (Rochalimaea henselae) protein is DNA repair protein RecO.